We begin with the raw amino-acid sequence, 84 residues long: Exodeoxyribonuclease 7 small subunit (84 aa).

This sequence belongs to the XseB family. In terms of assembly, heterooligomer composed of large and small subunits.

It localises to the cytoplasm. The catalysed reaction is Exonucleolytic cleavage in either 5'- to 3'- or 3'- to 5'-direction to yield nucleoside 5'-phosphates.. Bidirectionally degrades single-stranded DNA into large acid-insoluble oligonucleotides, which are then degraded further into small acid-soluble oligonucleotides. The chain is Exodeoxyribonuclease 7 small subunit from Yersinia enterocolitica serotype O:8 / biotype 1B (strain NCTC 13174 / 8081).